The sequence spans 655 residues: UvrABC system protein B (655 aa).

The region spanning 25–181 (DGINKGEKEQ…IRKLVFMQYE (157 aa)) is the Helicase ATP-binding domain. Position 38-45 (38-45 (GVTGSGKT)) interacts with ATP. The short motif at 91–114 (YYDYYQPEAYVPRTDTFIDKESSV) is the Beta-hairpin element. One can recognise a Helicase C-terminal domain in the interval 428-590 (QVEDLLGEVK…IVPKTTKRAL (163 aa)). Positions 615–650 (RLLISDLENDMKEAAAKLDFERAASLRDQIATLKGL) constitute a UVR domain.

Belongs to the UvrB family. Forms a heterotetramer with UvrA during the search for lesions. Interacts with UvrC in an incision complex.

The protein resides in the cytoplasm. The UvrABC repair system catalyzes the recognition and processing of DNA lesions. A damage recognition complex composed of 2 UvrA and 2 UvrB subunits scans DNA for abnormalities. Upon binding of the UvrA(2)B(2) complex to a putative damaged site, the DNA wraps around one UvrB monomer. DNA wrap is dependent on ATP binding by UvrB and probably causes local melting of the DNA helix, facilitating insertion of UvrB beta-hairpin between the DNA strands. Then UvrB probes one DNA strand for the presence of a lesion. If a lesion is found the UvrA subunits dissociate and the UvrB-DNA preincision complex is formed. This complex is subsequently bound by UvrC and the second UvrB is released. If no lesion is found, the DNA wraps around the other UvrB subunit that will check the other stand for damage. In Methanobrevibacter smithii (strain ATCC 35061 / DSM 861 / OCM 144 / PS), this protein is UvrABC system protein B.